Here is a 338-residue protein sequence, read N- to C-terminus: Oligopeptide transport ATP-binding protein OppD (338 aa).

Positions 7 to 257 constitute an ABC transporter domain; that stretch reads LEAKQVSVAF…PKHPYTRSLL (251 aa). 43–50 lines the ATP pocket; sequence GESGSGKS.

This sequence belongs to the ABC transporter superfamily. As to quaternary structure, the complex is composed of two ATP-binding proteins (OppD and OppF), two transmembrane proteins (OppB and OppC) and a solute-binding protein (OppA).

Its subcellular location is the cell membrane. The enzyme catalyses a [peptide](out) + ATP + H2O = a [peptide](in) + ADP + phosphate + H(+). In terms of biological role, part of the ABC transporter complex OppABCDF involved in the uptake of oligopeptides. Probably responsible for energy coupling to the transport system. Essential for uptake of peptides larger than three amino acids and for growth in milk. This Lactococcus lactis subsp. lactis (strain IL1403) (Streptococcus lactis) protein is Oligopeptide transport ATP-binding protein OppD (oppD).